We begin with the raw amino-acid sequence, 843 residues long: Pullulanase (843 aa).

An N-terminal signal peptide occupies residues methionine 1–serine 19. Catalysis depends on aspartate 535, which acts as the Nucleophile. The Proton donor role is filled by glutamate 564.

This sequence belongs to the glycosyl hydrolase 13 family.

It catalyses the reaction Hydrolysis of (1-&gt;6)-alpha-D-glucosidic linkages in pullulan, amylopectin and glycogen, and in the alpha- and beta-limit dextrins of amylopectin and glycogen.. The chain is Pullulanase (pulA) from Thermotoga maritima (strain ATCC 43589 / DSM 3109 / JCM 10099 / NBRC 100826 / MSB8).